A 188-amino-acid polypeptide reads, in one-letter code: Probable manganese efflux pump MntP (188 aa).

A run of 6 helical transmembrane segments spans residues 3–23 (YTATVLLAFGMSMDAFAASIG), 41–61 (LIFGAVETLTPLIGWGLGILA), 66–86 (LEWNHWIAFVLLIFLGGRMII), 106–128 (WLLVTTAIATSLDAMAVGVGLAF), 143–163 (ATLIMSTLGMMIGRFIGPMLG), and 168–188 (ILGGVVLIGIGVQILWTHFHG).

It belongs to the MntP (TC 9.B.29) family.

Its subcellular location is the cell inner membrane. Probably functions as a manganese efflux pump. This chain is Probable manganese efflux pump MntP, found in Salmonella heidelberg (strain SL476).